The sequence spans 264 residues: Enhancer of mRNA-decapping protein 1 (264 aa).

Disordered regions lie at residues 1 to 180 and 193 to 264; these read MLAQ…FSTI and YNNP…LRDY. The span at 63–74 shows a compositional bias: basic residues; sequence GKKSTSKPKSKS. Polar residues predominate over residues 83–92; it reads NFKLTASPSL. The segment covering 108 to 118 has biased composition (pro residues); it reads PSPPPPPPPST. Low complexity-rich tracts occupy residues 119 to 134, 161 to 172, and 208 to 226; these read QPST…RTST, NGKKPNFFNNNN, and NNNN…NSNS. The span at 248–264 shows a compositional bias: polar residues; the sequence is FKSNNGSPRQSSGLRDY.

The protein belongs to the EDC family.

It is found in the cytoplasm. Functionally, mRNA-binding protein which stimulates mRNA decapping. The polypeptide is Enhancer of mRNA-decapping protein 1 (EDC1) (Candida albicans (strain SC5314 / ATCC MYA-2876) (Yeast)).